The sequence spans 686 residues: Acyl-CoA synthetase short-chain family member 3, mitochondrial (686 aa).

A mitochondrion-targeting transit peptide spans 1 to 29 (MKPSWLQCRKVTSAGGLGGPLPGSSPARG). 227-230 (EPGR) lines the CoA pocket. ATP-binding positions include 425-427 (GER) and 446-451 (DHWWQT). K518 carries the post-translational modification N6-succinyllysine. Residue K524 is modified to N6-acetyllysine. Residues D539, R554, and R565 each coordinate ATP. Residue R624 coordinates CoA.

This sequence belongs to the ATP-dependent AMP-binding enzyme family.

Its subcellular location is the mitochondrion matrix. It catalyses the reaction acetate + ATP + CoA = acetyl-CoA + AMP + diphosphate. It carries out the reaction propanoate + ATP + CoA = propanoyl-CoA + AMP + diphosphate. The catalysed reaction is butanoate + ATP + CoA = butanoyl-CoA + AMP + diphosphate. Functionally, catalyzes the synthesis of acetyl-CoA from short-chain fatty acids. Propionate is the preferred substrate. Can utilize acetate and butyrate with a much lower affinity. The sequence is that of Acyl-CoA synthetase short-chain family member 3, mitochondrial (ACSS3) from Homo sapiens (Human).